The following is a 235-amino-acid chain: MAAKIFCLIMLLGLSASAATASIFPQCSQAPIASLLPPYLSPAMSSVCENPILLPYRIQQAIAAGILPLSPLFLQQSSALLQQLPLVHLLAQNIRAQQLQQLVLANLAAYSQQQQFLPFNQLAALNSAAYLQQQQLLPFSQLAAAYPRQFLPFNQLAALNSHAYVQQQQLLPFSQLAAVSPAAFLTQQQLLPFYLHTAPNVGTLLQLQQLLPFDQLALTNPAAFYQQPIIGGALF.

A signal peptide spans 1 to 21 (MAAKIFCLIMLLGLSASAATA).

Belongs to the zein family.

Its function is as follows. Zeins are major seed storage proteins. This Zea mays (Maize) protein is Zein-alpha ZG99.